We begin with the raw amino-acid sequence, 260 residues long: Transcriptional activator protein AsaR (260 aa).

Residues E176 to G241 form the HTH luxR-type domain. The H-T-H motif DNA-binding region spans S200–N219.

Belongs to the autoinducer-regulated transcriptional regulatory protein family.

Its function is as follows. Functions as a BHL-responsive transcriptional regulator. This Aeromonas salmonicida protein is Transcriptional activator protein AsaR.